The following is a 643-amino-acid chain: 1-deoxy-D-xylulose-5-phosphate synthase (643 aa).

Thiamine diphosphate is bound by residues H72 and 113-115 (GHA). Residue D144 coordinates Mg(2+). Residues 145-146 (GA), N174, Y287, and E370 each bind thiamine diphosphate. N174 lines the Mg(2+) pocket.

Belongs to the transketolase family. DXPS subfamily. Homodimer. It depends on Mg(2+) as a cofactor. Requires thiamine diphosphate as cofactor.

It carries out the reaction D-glyceraldehyde 3-phosphate + pyruvate + H(+) = 1-deoxy-D-xylulose 5-phosphate + CO2. The protein operates within metabolic intermediate biosynthesis; 1-deoxy-D-xylulose 5-phosphate biosynthesis; 1-deoxy-D-xylulose 5-phosphate from D-glyceraldehyde 3-phosphate and pyruvate: step 1/1. Catalyzes the acyloin condensation reaction between C atoms 2 and 3 of pyruvate and glyceraldehyde 3-phosphate to yield 1-deoxy-D-xylulose-5-phosphate (DXP). The sequence is that of 1-deoxy-D-xylulose-5-phosphate synthase from Prochlorococcus marinus (strain MIT 9211).